A 338-amino-acid chain; its full sequence is Putative peptide import ATP-binding protein BruAb2_0796 (338 aa).

The region spanning 7-263 (LDIEGLRTVF…PRHPYTMGLL (257 aa)) is the ABC transporter domain. 43–50 (GESGSGKS) is an ATP binding site.

This sequence belongs to the ABC transporter superfamily. The complex is composed of two ATP-binding proteins (BruAb2_0796 and BruAb2_0797), two transmembrane proteins (BruAb2_0794) and a solute-binding protein (BruAb2_0792).

Its subcellular location is the cell inner membrane. Its function is as follows. Probably part of an ABC transporter complex that could be involved in peptide import. Probably responsible for energy coupling to the transport system. This chain is Putative peptide import ATP-binding protein BruAb2_0796, found in Brucella abortus biovar 1 (strain 9-941).